We begin with the raw amino-acid sequence, 328 residues long: UPF0194 membrane protein YE2891 (328 aa).

Residues 1-22 form the signal peptide; the sequence is MNRKKIIVAVVIVALLAAIGYG. 2 coiled-coil regions span residues 80-109 and 139-208; these read YVNALKQAQANVQSAQAQLALLKAGYREEE and ANKA…TTLL.

This sequence belongs to the UPF0194 family.

Its subcellular location is the periplasm. The protein is UPF0194 membrane protein YE2891 of Yersinia enterocolitica serotype O:8 / biotype 1B (strain NCTC 13174 / 8081).